Consider the following 344-residue polypeptide: MITERQSNILNLIVDLFTQTHEPVGSKALQSLIASSSATIRNDMAKLEKLGLLEKAHTSSGRMPSAAGFKYFVEHSLNLGSIDEQDLYQLVKAFDFEAFKLEDVLLRASQMLSDTTGYTAAILDVEPARQRLTGFDIVQLSSHDALAVLSLDESKPLTVQFAIPKNFMNRDLLVLKGIVADRLLGKDVMTVHYKLRTEIPQIVQKYFTVTDNVLDLFDYIFVGLFRETIFVSGKVAALDYAGLATYQFLDEEQRLALSIRQSLSEEEMATVQVADSSEPALANVTLLTYKFLIPYRGFGLLSLIGPVDMDYRRSVSLINVIGQLLAVKLRDYYRYLNSNHYEVH.

It belongs to the HrcA family.

Functionally, negative regulator of class I heat shock genes (grpE-dnaK-dnaJ and groELS operons). Prevents heat-shock induction of these operons. The protein is Heat-inducible transcription repressor HrcA of Streptococcus equi subsp. equi (strain 4047).